A 350-amino-acid chain; its full sequence is MNMEIFGNSISNILIFVVITLLGIFIGKIVDKIVRNYLKKIIDKTKTKFDDIILESIDLPIIVLVVTLFFYFGLRFLILPDYILKLIDEAVKVVVILSATYFAVKFIDGIFEHYLIPLTEKTETELDEHIIKPLKKVVKILTILLGILTALSSVGYDITALLAGLGVGGLALALAMQDTIKNFIAGILILIDKPFSLGHWVKVKGAEGIVEEIGIRSTRIRTFDYTLITIPNSELLDSAIENLTVRDRRRVLMTIGLTYNTPVEKIKRAKEIIKEIVENHPATLPPYRVHFREYGDWSLNLRVEYFVRNMGFDYYLNAVDEINLKIKEEFEKEGIEMAFPTYTVYLEKDN.

The next 5 helical transmembrane spans lie at I10–V30, L59–L79, V91–F111, I130–A150, and V154–L174.

The protein belongs to the MscS (TC 1.A.23) family.

It localises to the cell membrane. Its function is as follows. Small-conductance mechanosensitive channel that opens in response to stretch forces in the membrane lipid bilayer. Exhibits a sixfold preference for cations over anions. Non-rectifying. The protein is Small-conductance mechanosensitive channel MscMJ of Methanocaldococcus jannaschii (strain ATCC 43067 / DSM 2661 / JAL-1 / JCM 10045 / NBRC 100440) (Methanococcus jannaschii).